A 195-amino-acid chain; its full sequence is Probable nicotinate-nucleotide adenylyltransferase (195 aa).

It belongs to the NadD family.

The enzyme catalyses nicotinate beta-D-ribonucleotide + ATP + H(+) = deamido-NAD(+) + diphosphate. The protein operates within cofactor biosynthesis; NAD(+) biosynthesis; deamido-NAD(+) from nicotinate D-ribonucleotide: step 1/1. Functionally, catalyzes the reversible adenylation of nicotinate mononucleotide (NaMN) to nicotinic acid adenine dinucleotide (NaAD). In Dictyoglomus thermophilum (strain ATCC 35947 / DSM 3960 / H-6-12), this protein is Probable nicotinate-nucleotide adenylyltransferase.